A 773-amino-acid polypeptide reads, in one-letter code: MKKLILLFSLFLAPAFSYKENQKINQNFSSNNTSHKRLKRDWIWNRMHIREEIDSPLPHHVGKLTSSVGNKNAMYIIEGESANTIFKVQGYDGDIYAFERLDREKKAEYELTAHIIDRRNNRSLEPPSKFIIKVSDINDNAPIFVQKIFNGSVPEMSRLGTSVTKVTAEDADDPTVAGHATVTYQIIKGNEYFTVDDSGVISTARADLDRESQSAYEIIVKAKDALGLTGESSTATVIIRLTDINDNFPVFKHPSFHFRVPENISVGGEVGRVKVEDIDEPQHRNTKYSFVRGDYRDTFEIIANPFTNEGIIRPKKPLDFEKVAEYRFDIEATDHNVNPAYYKPGGSRSISTITIEVTDVDEPPVFTKLSYEFKVRENDPEIKTLGSVWAHDPDAAKRKIRFARRRASPNGDYVRVSDSGIIQLPKPLDREFSSLYNITVAAQEILEDGRLSDRESHAQVHVIVTDENDNAPELVYPEEPRVCENAAPGKVIIRISATDKDEISPGGFFTYSLTTEDSNFSLTENPDNTANITVKDGQFNRELAKIHYLPVIISDNGNPELSSTNTLVISVCKCNEKGDFTFCEERAKQVGVSVQALVAIFICIFTIIAVIALLILLRKRHKKDLSGLRRNVAEIHEQLVTYDEEGGGEMDTTSYDVSVLNSVRKNGIKPEVVPSAYAQVQKPPGNTTSGAGEMEMMIEVKKDEADNDRDLLPYDTLHIYGYEGAESIAESLSSLESGSSDSDIDYDFLNDWGPRFKMLAELYGSEPNEDFVY.

Residues 1-18 (MKKLILLFSLFLAPAFSY) form the signal peptide. Residues 19–40 (KENQKINQNFSSNNTSHKRLKR) constitute a propeptide that is removed on maturation. N-linked (GlcNAc...) asparagine glycans are attached at residues Asn-27, Asn-31, and Asn-32. 5 consecutive Cadherin domains span residues 39–144 (KRDW…APIF), 145–251 (VQKI…FPVF), 252–366 (KHPS…PPVF), 367–474 (TKLS…APEL), and 474–582 (LVYP…DFTF). The Extracellular portion of the chain corresponds to 41–595 (DWIWNRMHIR…RAKQVGVSVQ (555 aa)). The Ca(2+) site is built by Glu-51, Glu-52, Asp-102, and Glu-104. N-linked (GlcNAc...) asparagine glycosylation is present at Asn-121. The Ca(2+) site is built by Asp-136, Ile-137, Asn-138, Asp-139, and Asn-140. A glycan (N-linked (GlcNAc...) asparagine) is linked at Asn-150. Asp-170, Asp-172, His-179, and Asp-224 together coordinate Ca(2+). Asn-263, Asn-437, Asn-519, and Asn-531 each carry an N-linked (GlcNAc...) asparagine glycan. Residues 596-617 (ALVAIFICIFTIIAVIALLILL) traverse the membrane as a helical segment. Residues 618 to 773 (RKRHKKDLSG…GSEPNEDFVY (156 aa)) are Cytoplasmic-facing.

Post-translationally, N-glycosylated. In terms of processing, O-glycosylated.

Its subcellular location is the cell junction. The protein resides in the adherens junction. It is found in the cell membrane. The protein localises to the cytoplasm. Its function is as follows. Cadherins are calcium-dependent cell adhesion proteins. They preferentially interact with themselves in a homophilic manner in connecting cells; cadherins may thus contribute to the sorting of heterogeneous cell types. This cadherin may play a important role in endothelial cell biology through control of the cohesion and organization of the intercellular junctions. Plays a role in coupling actin fibers to cell junctions in endothelial cells. Associates with CTNND1/p120-catenin to control CADH5 endocytosis. The chain is Cadherin-5 from Gallus gallus (Chicken).